The primary structure comprises 254 residues: Flavin-dependent thymidylate synthase (254 aa).

Residues 7 to 237 (LRVQLIAKTE…PAVFADFEIT (231 aa)) enclose the ThyX domain. DUMP-binding positions include 92 to 95 (ELIR), 103 to 107 (QLSQR), and His176. FAD-binding positions include 95–97 (RHR) and Gln103. A ThyX motif motif is present at residues 95–105 (RHRHFSYSQLS). FAD-binding positions include 192-194 (NYR) and His198. Position 203 (Arg203) interacts with dUMP. Residue Arg203 is the Involved in ionization of N3 of dUMP, leading to its activation of the active site.

The protein belongs to the thymidylate synthase ThyX family. In terms of assembly, homotetramer. Requires FAD as cofactor.

The enzyme catalyses dUMP + (6R)-5,10-methylene-5,6,7,8-tetrahydrofolate + NADPH + H(+) = dTMP + (6S)-5,6,7,8-tetrahydrofolate + NADP(+). It participates in pyrimidine metabolism; dTTP biosynthesis. Functionally, catalyzes the reductive methylation of 2'-deoxyuridine-5'-monophosphate (dUMP) to 2'-deoxythymidine-5'-monophosphate (dTMP) while utilizing 5,10-methylenetetrahydrofolate (mTHF) as the methyl donor, and NADPH and FADH(2) as the reductant. This chain is Flavin-dependent thymidylate synthase, found in Mycobacterium leprae (strain Br4923).